The sequence spans 300 residues: Protease HtpX (300 aa).

The next 2 helical transmembrane spans lie at 4-24 (ILLFLATNLAVVLVASITLRL) and 40-60 (SLLIFCFVIGMAGSLVSLFIS). A Zn(2+)-binding site is contributed by His-145. Glu-146 is a catalytic residue. His-149 is a Zn(2+) binding site. 2 helical membrane-spanning segments follow: residues 153-173 (GDMVTLALIQGVLNTFVMFFA) and 193-213 (LGFFGYMAVVIVAEIVFGLVA). Glu-225 provides a ligand contact to Zn(2+).

The protein belongs to the peptidase M48B family. Zn(2+) is required as a cofactor.

Its subcellular location is the cell inner membrane. The sequence is that of Protease HtpX from Chromohalobacter salexigens (strain ATCC BAA-138 / DSM 3043 / CIP 106854 / NCIMB 13768 / 1H11).